We begin with the raw amino-acid sequence, 101 residues long: Enhancer of yellow 2 transcription factor (101 aa).

It belongs to the ENY2 family. As to quaternary structure, component of the nuclear pore complex (NPC)-associated AMEX complex (anchoring and mRNA export complex), composed of at least e(y)2 and xmas-2. Component of the SAGA transcription coactivator-HAT complexes, at least composed of Ada2b, e(y)2, Pcaf/Gcn5, Taf10 and Nipped-A/Trrap. Within the SAGA complex, e(y)2, Sgf11, and not/nonstop form an additional subcomplex of SAGA called the DUB module (deubiquitination module). Component of the THO complex, composed of at least e(y)2, HPR1, THO2, THOC5, THOC6 and THOC7. Interacts with e(y)1. Interacts with su(Hw) (via zinc fingers). Interacts with xmas-2; required for localization to the nuclear periphery. Interacts with the nuclear pore complex (NPC).

Its subcellular location is the nucleus. The protein resides in the nucleoplasm. It is found in the cytoplasm. Involved in mRNA export coupled transcription activation by association with both the AMEX and the SAGA complexes. The SAGA complex is a multiprotein complex that activates transcription by remodeling chromatin and mediating histone acetylation and deubiquitination. Within the SAGA complex, participates in a subcomplex that specifically deubiquitinates histone H2B. The SAGA complex is recruited to specific gene promoters by activators, where it is required for transcription. Required for nuclear receptor-mediated transactivation. Involved in transcription elongation by recruiting the THO complex onto nascent mRNA. The AMEX complex functions in docking export-competent ribonucleoprotein particles (mRNPs) to the nuclear entrance of the nuclear pore complex (nuclear basket). AMEX participates in mRNA export and accurate chromatin positioning in the nucleus by tethering genes to the nuclear periphery. In Drosophila erecta (Fruit fly), this protein is Enhancer of yellow 2 transcription factor.